We begin with the raw amino-acid sequence, 308 residues long: Acetaldehyde dehydrogenase 1 (308 aa).

10–13 lines the NAD(+) pocket; the sequence is SGNI. The active-site Acyl-thioester intermediate is Cys-128. NAD(+) contacts are provided by residues 159–167 and Asn-285; that span reads SAGPGTRAN.

It belongs to the acetaldehyde dehydrogenase family.

It carries out the reaction acetaldehyde + NAD(+) + CoA = acetyl-CoA + NADH + H(+). In Salinispora arenicola (strain CNS-205), this protein is Acetaldehyde dehydrogenase 1.